Reading from the N-terminus, the 226-residue chain is ATP synthase F(0) complex subunit a (226 aa).

6 helical membrane passes run 12–32 (PTIL…LLIP), 68–88 (WSLM…LGLL), 97–117 (QLSM…ATGF), 138–158 (IPML…ALAV), 164–184 (ITAG…LSTI), and 200–222 (TTLE…SLYL).

This sequence belongs to the ATPase A chain family. Component of the ATP synthase complex composed at least of ATP5F1A/subunit alpha, ATP5F1B/subunit beta, ATP5MC1/subunit c (homooctomer), MT-ATP6/subunit a, MT-ATP8/subunit 8, ATP5ME/subunit e, ATP5MF/subunit f, ATP5MG/subunit g, ATP5MK/subunit k, ATP5MJ/subunit j, ATP5F1C/subunit gamma, ATP5F1D/subunit delta, ATP5F1E/subunit epsilon, ATP5PF/subunit F6, ATP5PB/subunit b, ATP5PD/subunit d, ATP5PO/subunit OSCP. ATP synthase complex consists of a soluble F(1) head domain (subunits alpha(3) and beta(3)) - the catalytic core - and a membrane F(0) domain - the membrane proton channel (subunits c, a, 8, e, f, g, k and j). These two domains are linked by a central stalk (subunits gamma, delta, and epsilon) rotating inside the F1 region and a stationary peripheral stalk (subunits F6, b, d, and OSCP). Interacts with DNAJC30; interaction is direct.

Its subcellular location is the mitochondrion inner membrane. The enzyme catalyses H(+)(in) = H(+)(out). Its function is as follows. Subunit a, of the mitochondrial membrane ATP synthase complex (F(1)F(0) ATP synthase or Complex V) that produces ATP from ADP in the presence of a proton gradient across the membrane which is generated by electron transport complexes of the respiratory chain. ATP synthase complex consist of a soluble F(1) head domain - the catalytic core - and a membrane F(1) domain - the membrane proton channel. These two domains are linked by a central stalk rotating inside the F(1) region and a stationary peripheral stalk. During catalysis, ATP synthesis in the catalytic domain of F(1) is coupled via a rotary mechanism of the central stalk subunits to proton translocation. With the subunit c (ATP5MC1), forms the proton-conducting channel in the F(0) domain, that contains two crucial half-channels (inlet and outlet) that facilitate proton movement from the mitochondrial intermembrane space (IMS) into the matrix. Protons are taken up via the inlet half-channel and released through the outlet half-channel, following a Grotthuss mechanism. The protein is ATP synthase F(0) complex subunit a of Hylobates lar (Lar gibbon).